Here is a 232-residue protein sequence, read N- to C-terminus: Orotidine 5'-phosphate decarboxylase (232 aa).

Residues aspartate 11, lysine 32, 59–68 (DLKFHDIPNT), threonine 118, arginine 180, glutamine 189, glycine 209, and arginine 210 each bind substrate. Catalysis depends on lysine 61, which acts as the Proton donor.

This sequence belongs to the OMP decarboxylase family. Type 1 subfamily. In terms of assembly, homodimer.

It carries out the reaction orotidine 5'-phosphate + H(+) = UMP + CO2. It participates in pyrimidine metabolism; UMP biosynthesis via de novo pathway; UMP from orotate: step 2/2. Functionally, catalyzes the decarboxylation of orotidine 5'-monophosphate (OMP) to uridine 5'-monophosphate (UMP). The chain is Orotidine 5'-phosphate decarboxylase from Gloeothece citriformis (strain PCC 7424) (Cyanothece sp. (strain PCC 7424)).